The following is a 360-amino-acid chain: Biotin synthase (360 aa).

The disordered stretch occupies residues M1–A21. The Radical SAM core domain occupies N62–R289. 3 residues coordinate [4Fe-4S] cluster: C77, C81, and C84. Residues C121, C152, C212, and R284 each contribute to the [2Fe-2S] cluster site.

This sequence belongs to the radical SAM superfamily. Biotin synthase family. As to quaternary structure, homodimer. The cofactor is [4Fe-4S] cluster. Requires [2Fe-2S] cluster as cofactor.

The catalysed reaction is (4R,5S)-dethiobiotin + (sulfur carrier)-SH + 2 reduced [2Fe-2S]-[ferredoxin] + 2 S-adenosyl-L-methionine = (sulfur carrier)-H + biotin + 2 5'-deoxyadenosine + 2 L-methionine + 2 oxidized [2Fe-2S]-[ferredoxin]. The protein operates within cofactor biosynthesis; biotin biosynthesis; biotin from 7,8-diaminononanoate: step 2/2. Functionally, catalyzes the conversion of dethiobiotin (DTB) to biotin by the insertion of a sulfur atom into dethiobiotin via a radical-based mechanism. This Paraburkholderia xenovorans (strain LB400) protein is Biotin synthase.